Here is a 95-residue protein sequence, read N- to C-terminus: Aspartyl/glutamyl-tRNA(Asn/Gln) amidotransferase subunit C (95 aa).

It belongs to the GatC family. In terms of assembly, heterotrimer of A, B and C subunits.

It carries out the reaction L-glutamyl-tRNA(Gln) + L-glutamine + ATP + H2O = L-glutaminyl-tRNA(Gln) + L-glutamate + ADP + phosphate + H(+). The catalysed reaction is L-aspartyl-tRNA(Asn) + L-glutamine + ATP + H2O = L-asparaginyl-tRNA(Asn) + L-glutamate + ADP + phosphate + 2 H(+). Functionally, allows the formation of correctly charged Asn-tRNA(Asn) or Gln-tRNA(Gln) through the transamidation of misacylated Asp-tRNA(Asn) or Glu-tRNA(Gln) in organisms which lack either or both of asparaginyl-tRNA or glutaminyl-tRNA synthetases. The reaction takes place in the presence of glutamine and ATP through an activated phospho-Asp-tRNA(Asn) or phospho-Glu-tRNA(Gln). This Pseudomonas entomophila (strain L48) protein is Aspartyl/glutamyl-tRNA(Asn/Gln) amidotransferase subunit C.